The following is a 241-amino-acid chain: 3-deoxy-D-manno-octulosonic acid kinase (241 aa).

The active site involves D171.

The protein belongs to the protein kinase superfamily. KdkA/RfaP family.

The protein resides in the cell inner membrane. It carries out the reaction an alpha-Kdo-(2-&gt;6)-lipid IVA + ATP = a 4-O-phospho-alpha-Kdo-(2-&gt;6)-lipid IVA + ADP + H(+). It functions in the pathway bacterial outer membrane biogenesis; LPS core biosynthesis. Functionally, catalyzes the ATP-dependent phosphorylation of the 3-deoxy-D-manno-octulosonic acid (Kdo) residue in Kdo-lipid IV(A) at the 4-OH position. The polypeptide is 3-deoxy-D-manno-octulosonic acid kinase (Haemophilus influenzae (strain 86-028NP)).